The following is a 1343-amino-acid chain: MVYSYSEKKRIRKDFGKRPQVLDIPYLLSIQLDSFKKFTDQDPTGERGFEAAFRSVFPIKSFSGYSELQYVSYKLGEPVFDVKECQIRGVTYSAPLRVKLRMVLFDREAAAGTVKDIKEQEVYMGDIPLMTDNGTFVINGTERVIVSQLHRSPGVFFDHDRGKTHSSGKVLYNARIIPYRGSWLDFEFDPKDALFVRIDRRRKLPATIMLRALEYSTQDILDLFFERIQFKIKKDSLVMALVPDRLRGETASYDIKAADGSVLVEAGRRITARHIKQLEQSNTTELEVPVDYIVGKYAAQDYIDEDTGEVLVSANNEISLEDLAKLSIAGIKEIDTLFINDLDHGAYISDTLRIDSTTNRLEALVEIYRMMRPGEPPTKDAAEALFQNLFFSEERYDLSKVGRMKFNRRLEIAEDEGNGVLSKDDIVCVMKKIIEIRNGYDEVDDIDHLGNRRIRSVGEMAENQFRVGLVRVERAVRERLSLGDLNELMPQDLINAKPISAAVKEFFGSSQLSQFMDQNNPLSEVTHKRRISALGPGGLTRERAGFEVRDVHPTHYGRLCPIETPEGPNIGLINSLASFARTNSYGFLETPYRKVVEGVITDEVEYLSAIEEGRYVIAQANIEVDSTGRMVEEQIACRHKGESTFMRAADIQYMDVSPQQIISVAASLIPFLEHDDANRALMGANMQRQAVPTLRADKPLVGTGIERTLAVDSGVVVVAKRGGVVDYVDASRIVVKVNEDELRPGEAGIDIYNLTKYTRSNQNTCINQRPCCFVGEPVVRGDVLADGPSTDLGELALGQNMRIAFMPWNGYNFEDSILISERVAQEDRFTTIHIQELSCIARDTKLGSEEITADIPNVGESALSKLDESGIVYIGAEVKGGDILVGKVTPKGETQLTPEEKLLRAIFGEKASDVKDSSLRVPNSVKGTIIDVQVFTRDGVEKDKRALEIEEMHVAQARKDLGEEFKILEEGVLSRARNLLLSAGYSEAKLAELPRKDVLIQVIDDEAKQTELEQLAEQHEELKADFDKKFEIKRRKITQGDDLAPGVLKIVKVYLAVKRTIQPGDKMAGRHGNKGVISKICPVEDMPYDEEGNPVDIVLNPLGVPSRMNIGQVLEVHMGAAAKGIGNKITAMLEEQREIAELRGYIKQVYELGDDVLQRVDIDSFSDDEVVRLATHLKGGIPIATPAFDGAKEKEIKQMLALAGLPESGQLTLCDGRTGNEFERKVTVGYMYMLKLNHLVDDKMHARSTGSYSLVTQQPLGGKAQFGGQRFGEMEVWALEAYGAAYTLQEMLTVKSDDVNGRTQMYKNIVDGNHQMQPGMPESFNVLLKEIRSLGINIELDQE.

It belongs to the RNA polymerase beta chain family. As to quaternary structure, the RNAP catalytic core consists of 2 alpha, 1 beta, 1 beta' and 1 omega subunit. When a sigma factor is associated with the core the holoenzyme is formed, which can initiate transcription.

It catalyses the reaction RNA(n) + a ribonucleoside 5'-triphosphate = RNA(n+1) + diphosphate. In terms of biological role, DNA-dependent RNA polymerase catalyzes the transcription of DNA into RNA using the four ribonucleoside triphosphates as substrates. The protein is DNA-directed RNA polymerase subunit beta of Shewanella denitrificans (strain OS217 / ATCC BAA-1090 / DSM 15013).